A 945-amino-acid chain; its full sequence is Isoleucine--tRNA ligase (945 aa).

The short motif at 66–76 (PYANGDIHLGH) is the 'HIGH' region element. Glu-581 lines the L-isoleucyl-5'-AMP pocket. Positions 622–626 (KMSKS) match the 'KMSKS' region motif. Position 625 (Lys-625) interacts with ATP. The Zn(2+) site is built by Cys-908, Cys-911, Cys-928, and Cys-931.

The protein belongs to the class-I aminoacyl-tRNA synthetase family. IleS type 1 subfamily. In terms of assembly, monomer. The cofactor is Zn(2+).

Its subcellular location is the cytoplasm. It catalyses the reaction tRNA(Ile) + L-isoleucine + ATP = L-isoleucyl-tRNA(Ile) + AMP + diphosphate. Catalyzes the attachment of isoleucine to tRNA(Ile). As IleRS can inadvertently accommodate and process structurally similar amino acids such as valine, to avoid such errors it has two additional distinct tRNA(Ile)-dependent editing activities. One activity is designated as 'pretransfer' editing and involves the hydrolysis of activated Val-AMP. The other activity is designated 'posttransfer' editing and involves deacylation of mischarged Val-tRNA(Ile). The sequence is that of Isoleucine--tRNA ligase from Burkholderia cenocepacia (strain HI2424).